A 206-amino-acid polypeptide reads, in one-letter code: Glycerol-3-phosphate acyltransferase (206 aa).

A run of 5 helical transmembrane segments spans residues 14–34 (IALA…GLIL), 67–87 (ATLL…GYFL), 91–111 (AAII…WIGF), 124–144 (LLGV…AVAF), and 148–168 (YSSL…LILG).

The protein belongs to the PlsY family. In terms of assembly, probably interacts with PlsX.

It is found in the cell inner membrane. It catalyses the reaction an acyl phosphate + sn-glycerol 3-phosphate = a 1-acyl-sn-glycero-3-phosphate + phosphate. The protein operates within lipid metabolism; phospholipid metabolism. In terms of biological role, catalyzes the transfer of an acyl group from acyl-phosphate (acyl-PO(4)) to glycerol-3-phosphate (G3P) to form lysophosphatidic acid (LPA). This enzyme utilizes acyl-phosphate as fatty acyl donor, but not acyl-CoA or acyl-ACP. This chain is Glycerol-3-phosphate acyltransferase, found in Rhizobium etli (strain CIAT 652).